A 274-amino-acid chain; its full sequence is tRNA pseudouridine synthase A (274 aa).

Asp-60 serves as the catalytic Nucleophile. Tyr-118 lines the substrate pocket.

It belongs to the tRNA pseudouridine synthase TruA family. As to quaternary structure, homodimer.

The catalysed reaction is uridine(38/39/40) in tRNA = pseudouridine(38/39/40) in tRNA. Formation of pseudouridine at positions 38, 39 and 40 in the anticodon stem and loop of transfer RNAs. This is tRNA pseudouridine synthase A from Picosynechococcus sp. (strain ATCC 27264 / PCC 7002 / PR-6) (Agmenellum quadruplicatum).